Reading from the N-terminus, the 1121-residue chain is Piwi-like protein ergo-1 (1121 aa).

A compositionally biased stretch (gly residues) spans M1–Y14. The interval M1–V134 is disordered. 2 stretches are compositionally biased toward basic and acidic residues: residues R15–N29 and Y40–G77. The span at G99 to G112 shows a compositional bias: polar residues. Gly residues predominate over residues G125 to V134. The 109-residue stretch at V426 to V534 folds into the PAZ domain. In terms of domain architecture, Piwi spans N774–D1081.

Belongs to the argonaute family. Piwi subfamily. As to quaternary structure, interacts with rde-12. Interacts with rde-10. As to expression, highly expressed in the germline in hermaphrodites.

It is found in the cytoplasm. In terms of biological role, argonaute protein required for gene silencing in the endogenous RNA interference (RNAi) pathway. Involved in the 26G RNAi pathway and associates with both unmethylated and methylated 26G small interfering RNAs (26G-siRNAs), which are a class of 26 nucleotide siRNAs that possess a guanine residue at the 5'-end. Associated 26G-siRNAs are methylated by the methyltransferase henn-1, which stabilizes the siRNAs. Association with 26G-siRNAs is required for the biogenesis of secondary 22G-siRNAs (a class of 22 nucleotide siRNAs that possess a triphosphorylated guanine residue at the 5'-end). May be involved in passenger strand cleavage of target 26G-siRNAs. The polypeptide is Piwi-like protein ergo-1 (Caenorhabditis elegans).